A 62-amino-acid polypeptide reads, in one-letter code: Photosystem II reaction center protein Z (62 aa).

2 helical membrane passes run 8 to 28 and 41 to 61; these read SVFA…VVLA and FSGA…NSFI.

Belongs to the PsbZ family. In terms of assembly, PSII is composed of 1 copy each of membrane proteins PsbA, PsbB, PsbC, PsbD, PsbE, PsbF, PsbH, PsbI, PsbJ, PsbK, PsbL, PsbM, PsbT, PsbY, PsbZ, Psb30/Ycf12, at least 3 peripheral proteins of the oxygen-evolving complex and a large number of cofactors. It forms dimeric complexes.

The protein localises to the plastid. The protein resides in the chloroplast thylakoid membrane. Its function is as follows. May control the interaction of photosystem II (PSII) cores with the light-harvesting antenna, regulates electron flow through the 2 photosystem reaction centers. PSII is a light-driven water plastoquinone oxidoreductase, using light energy to abstract electrons from H(2)O, generating a proton gradient subsequently used for ATP formation. In Staurastrum punctulatum (Green alga), this protein is Photosystem II reaction center protein Z.